The chain runs to 72 residues: Translation initiation factor IF-1 (72 aa).

An S1-like domain is found at 1-72 (MAKEENIEMQ…SKGRIIFRAR (72 aa)).

It belongs to the IF-1 family. In terms of assembly, component of the 30S ribosomal translation pre-initiation complex which assembles on the 30S ribosome in the order IF-2 and IF-3, IF-1 and N-formylmethionyl-tRNA(fMet); mRNA recruitment can occur at any time during PIC assembly.

It is found in the cytoplasm. One of the essential components for the initiation of protein synthesis. Stabilizes the binding of IF-2 and IF-3 on the 30S subunit to which N-formylmethionyl-tRNA(fMet) subsequently binds. Helps modulate mRNA selection, yielding the 30S pre-initiation complex (PIC). Upon addition of the 50S ribosomal subunit IF-1, IF-2 and IF-3 are released leaving the mature 70S translation initiation complex. The polypeptide is Translation initiation factor IF-1 (Colwellia psychrerythraea (strain 34H / ATCC BAA-681) (Vibrio psychroerythus)).